The following is a 248-amino-acid chain: MAGHSQFKNIMHRKGRQDAVRSKMFSKLAREITVAAKSGMPDPAMNPRLRLAIQNAKAQSMPKDNIERAVKKAAGGDAENYEEVRYEGYGPGGVAVIVEALTDNRNRTASNVRSMFTKAGGALGETGSVSFSFDRVGEITYTLSAGDADKVMEAAIESGADDVTTDEDGHTILCGFEEIGDVSKALEGVLGEAETVKAIWKPQNTVPVDEEKAQSLMKLIDNLEDDDDVQNVYSNFEVSEEVLAKLSA.

The protein belongs to the TACO1 family.

The protein resides in the cytoplasm. This Sinorhizobium fredii (strain NBRC 101917 / NGR234) protein is Probable transcriptional regulatory protein NGR_c27950.